The sequence spans 132 residues: Agouti-signaling protein (132 aa).

An N-terminal signal peptide occupies residues 1 to 22; that stretch reads MDVTRLLLATLLVFLCFFTAYS. N39 carries an N-linked (GlcNAc...) asparagine glycan. Residues 61 to 87 form a disordered region; the sequence is QISRKEAEKKRSSKKEASMKKVARPRT. A compositionally biased stretch (basic and acidic residues) spans 63–79; the sequence is SRKEAEKKRSSKKEASM. 5 disulfide bridges follow: C93–C108, C100–C114, C107–C125, C111–C132, and C116–C123. One can recognise an Agouti domain in the interval 93–132; that stretch reads CVATRDSCKPPAPACCDPCAFCQCRFFRSACSCRVLSLNC.

The protein resides in the secreted. Its function is as follows. Involved in the regulation of melanogenesis. The binding of ASP to MC1R precludes alpha-MSH initiated signaling and thus blocks production of cAMP, leading to a down-regulation of eumelanogenesis (brown/black pigment) and thus increasing synthesis of pheomelanin (yellow/red pigment). The chain is Agouti-signaling protein (ASIP) from Macaca hecki (Heck's macaque).